The sequence spans 66 residues: Cocaine- and amphetamine-regulated transcript protein (66 aa).

Cystine bridges form between Cys34–Cys52 and Cys40–Cys60.

It belongs to the CART family.

The protein resides in the secreted. Satiety factor closely associated with the actions of leptin and neuropeptide y; this anorectic peptide inhibits both normal and starvation-induced feeding and completely blocks the feeding response induced by neuropeptide Y and regulated by leptin in the hypothalamus. This is Cocaine- and amphetamine-regulated transcript protein (CARTPT) from Sus scrofa (Pig).